The primary structure comprises 432 residues: Glutamate-1-semialdehyde 2,1-aminomutase (432 aa).

Lys272 carries the post-translational modification N6-(pyridoxal phosphate)lysine.

The protein belongs to the class-III pyridoxal-phosphate-dependent aminotransferase family. HemL subfamily. In terms of assembly, homodimer. Pyridoxal 5'-phosphate is required as a cofactor.

It localises to the cytoplasm. The catalysed reaction is (S)-4-amino-5-oxopentanoate = 5-aminolevulinate. The protein operates within porphyrin-containing compound metabolism; protoporphyrin-IX biosynthesis; 5-aminolevulinate from L-glutamyl-tRNA(Glu): step 2/2. It functions in the pathway porphyrin-containing compound metabolism; chlorophyll biosynthesis. This Cyanothece sp. (strain PCC 7425 / ATCC 29141) protein is Glutamate-1-semialdehyde 2,1-aminomutase.